Here is a 194-residue protein sequence, read N- to C-terminus: MAPRLVLASQSPRRRELLGQLGLALDVRPADTDERVLPGEPPRDYVLRVAREKARAVPGEVVLAADTAVVLGGEVLGKPRDAEDARRMLRALSGTRHEVLTGVCVRRNASALGVELDAVVATEVAFARLGDAEIDWYVGTGEPLDKAGAYAIQGSGGAFVQEVRGSVSNVVGLPLAETAALLRRAGFPLPWEQP.

Residue D66 is the Proton acceptor of the active site.

It belongs to the Maf family. YhdE subfamily. A divalent metal cation is required as a cofactor.

It localises to the cytoplasm. The catalysed reaction is dTTP + H2O = dTMP + diphosphate + H(+). The enzyme catalyses UTP + H2O = UMP + diphosphate + H(+). In terms of biological role, nucleoside triphosphate pyrophosphatase that hydrolyzes dTTP and UTP. May have a dual role in cell division arrest and in preventing the incorporation of modified nucleotides into cellular nucleic acids. This chain is dTTP/UTP pyrophosphatase, found in Anaeromyxobacter dehalogenans (strain 2CP-C).